A 156-amino-acid chain; its full sequence is Male-specific protein scotti (156 aa).

The disordered stretch occupies residues 26–48; the sequence is TADAGDDADTLEDGQQQQQQQHQ. Residue Asn137 is glycosylated (N-linked (GlcNAc...) asparagine).

It belongs to the male-specific scotti family.

Post-meiotically transcribed gene that has a role in late spermiogenesis; required for actin cone progression during spermatid individualization. The polypeptide is Male-specific protein scotti (Drosophila erecta (Fruit fly)).